An 81-amino-acid chain; its full sequence is MISKEKKLELVLKFGGSQKNTGDTRVQIAILTEDIESLKKHFAVNKKDKHSMRGFIAKVNQRKRLLAYLKEKDFNAYKQTI.

Belongs to the universal ribosomal protein uS15 family. Part of the 30S ribosomal subunit. Forms a bridge to the 50S subunit in the 70S ribosome, contacting the 23S rRNA.

One of the primary rRNA binding proteins, it binds directly to 16S rRNA where it helps nucleate assembly of the platform of the 30S subunit by binding and bridging several RNA helices of the 16S rRNA. Its function is as follows. Forms an intersubunit bridge (bridge B4) with the 23S rRNA of the 50S subunit in the ribosome. The sequence is that of Small ribosomal subunit protein uS15 from Mesomycoplasma hyorhinis (Mycoplasma hyorhinis).